The primary structure comprises 108 residues: Small ribosomal subunit protein uS10 (108 aa).

It belongs to the universal ribosomal protein uS10 family. In terms of assembly, part of the 30S ribosomal subunit.

Its function is as follows. Involved in the binding of tRNA to the ribosomes. In Ehrlichia canis (strain Jake), this protein is Small ribosomal subunit protein uS10.